The chain runs to 229 residues: RNA pyrophosphohydrolase (229 aa).

The 144-residue stretch at 6-149 folds into the Nudix hydrolase domain; it reads GFRPNVGIIL…KRGVYEMALT (144 aa). The Nudix box motif lies at 38-59; the sequence is GGIDRGETPEQAMFRELHEEVG. Residues 168–229 are disordered; sequence SGMRPREAHE…QVLHPDPGKA (62 aa).

It belongs to the Nudix hydrolase family. RppH subfamily. A divalent metal cation is required as a cofactor.

In terms of biological role, accelerates the degradation of transcripts by removing pyrophosphate from the 5'-end of triphosphorylated RNA, leading to a more labile monophosphorylated state that can stimulate subsequent ribonuclease cleavage. This is RNA pyrophosphohydrolase from Delftia acidovorans (strain DSM 14801 / SPH-1).